The primary structure comprises 199 residues: Nucleoside triphosphate pyrophosphatase (199 aa).

Asp-76 acts as the Proton acceptor in catalysis.

The protein belongs to the Maf family. It depends on a divalent metal cation as a cofactor.

Its subcellular location is the cytoplasm. The enzyme catalyses a ribonucleoside 5'-triphosphate + H2O = a ribonucleoside 5'-phosphate + diphosphate + H(+). The catalysed reaction is a 2'-deoxyribonucleoside 5'-triphosphate + H2O = a 2'-deoxyribonucleoside 5'-phosphate + diphosphate + H(+). Nucleoside triphosphate pyrophosphatase. May have a dual role in cell division arrest and in preventing the incorporation of modified nucleotides into cellular nucleic acids. The chain is Nucleoside triphosphate pyrophosphatase from Ruegeria pomeroyi (strain ATCC 700808 / DSM 15171 / DSS-3) (Silicibacter pomeroyi).